The primary structure comprises 61 residues: Large ribosomal subunit protein uL30 (61 aa).

Belongs to the universal ribosomal protein uL30 family. Part of the 50S ribosomal subunit.

This chain is Large ribosomal subunit protein uL30, found in Mycolicibacterium gilvum (strain PYR-GCK) (Mycobacterium gilvum (strain PYR-GCK)).